A 521-amino-acid chain; its full sequence is Feruloyl esterase B (521 aa).

The N-terminal stretch at 1–17 (MKVASLLSLALPGAALA) is a signal peptide. 2 disulfide bridges follow: C26-C72 and C61-C111. Residues N37, N51, N77, N95, N144, and N177 are each glycosylated (N-linked (GlcNAc...) asparagine). 3 disulfides stabilise this stretch: C184–C438, C253–C270, and C279–C288. The Acyl-ester intermediate role is filled by S185. Ca(2+) contacts are provided by D254, D257, A259, D261, and I263. 4 N-linked (GlcNAc...) asparagine glycosylation sites follow: N284, N347, N352, and N378. Catalysis depends on charge relay system residues D397 and H437. N488 and N511 each carry an N-linked (GlcNAc...) asparagine glycan. A disulfide bond links C498 and C520.

This sequence belongs to the tannase family. Homodimer. Glycosylated.

It localises to the secreted. It catalyses the reaction feruloyl-polysaccharide + H2O = ferulate + polysaccharide.. Inhibited by the specific serine esterase inhibitor AEBSF. In terms of biological role, involved in degradation of plant cell walls. Hydrolyzes of the feruloyl-arabinose ester bond in arabinoxylans as well as the feruloyl-galactose and feruloyl-arabinose ester bonds in pectin. The chain is Feruloyl esterase B (faeB) from Aspergillus niger.